The following is a 505-amino-acid chain: Exoglucanase 1 (505 aa).

The signal sequence occupies residues 1 to 17 (MYRKLAVISAFLAAARA). Gln-18 is modified (pyrrolidone carboxylic acid). Residues 18–449 (QQVCTQQAET…GSTGGNTGSN (432 aa)) form a catalytic region. Intrachain disulfides connect Cys-21–Cys-88, Cys-36–Cys-41, Cys-66–Cys-87, and Cys-77–Cys-83. 2 N-linked (GlcNAc...) asparagine glycosylation sites follow: Asn-93 and Asn-126. Intrachain disulfides connect Cys-151-Cys-410, Cys-185-Cys-223, Cys-189-Cys-222, Cys-243-Cys-269, Cys-251-Cys-256, and Cys-274-Cys-344. The active-site Nucleophile is the Glu-225. Residue Glu-230 is the Proton donor/acceptor of the active site. N-linked (GlcNAc...) asparagine glycosylation is found at Asn-283 and Asn-397. 2 disordered regions span residues 399-423 (TAST…VEAQ) and 440-472 (GSTG…ATQT). Polar residues predominate over residues 409-423 (SCSTSSGVPAQVEAQ). The segment covering 447–470 (GSNPPGTSTTRAPPSSTGSSPTAT) has biased composition (low complexity). The segment at 450–468 (PPGTSTTRAPPSSTGSSPT) is linker. In terms of domain architecture, CBM1 spans 469–505 (ATQTHYGQCGGTGWTGPTRCASGYTCQVLNPFYSQCL).

This sequence belongs to the glycosyl hydrolase 7 (cellulase C) family. O-glycosylated. O-glycosylation of the cellulase linker provides protection from proteolysis. Linker glycans also contribute to binding affinity of cellobiohydrolases to cellulose.

The protein localises to the secreted. The enzyme catalyses Hydrolysis of (1-&gt;4)-beta-D-glucosidic linkages in cellulose and cellotetraose, releasing cellobiose from the non-reducing ends of the chains.. Exocellobiohydrolases (CBH) that catalyzes the hydrolysis of 1,4-beta-D-glucosidic bonds in cellulose to release the disaccharide cellobiose. The degradation of cellulose involves an interplay between different cellulolytic enzymes. Hydrolysis starts with endoglucanases (EGs), which cut internal beta-1,4-glucosidic bonds in cellulose to reduce the polymerization degree of the substrate and create new chain ends for exocellobiohydrolases (CBHs). The CBHs release the disaccharide cellobiose from the non-reducing end of the cellulose polymer chain. Finally, beta-1,4-glucosidases hydrolyze the cellobiose and other short cello-oligosaccharides into glucose units. The sequence is that of Exoglucanase 1 (cbh1) from Trichoderma harzianum (Hypocrea lixii).